The primary structure comprises 930 residues: MAGKARVHELAKELGVTSKEVLARLGEQGEFVKSASSTVEAPVARRLRESFGGNKPDAVKPAAGASNGAPAKPSAPGARPGPRPGPPAPAQPKEPPAPAAPAAAAPAPAAPAPPAAPPAPAASAAPPSAPEAPSARPTPGPRPGPGGPKPGAPKPAPRTPRVGNNPFSSQQPVERPAPRPQGPAGPGGPRPGPGAGGPRPGGGPRPGATPGNMPPRPVGGPRPGGGPRPGGGPRPGAGPRPTPGGAGRPGGGGGGNYRGGGAGGGGGAGGAAAGGFRGRPGGGGGRPGQRGGAAGAFGRPGGAPKRGRKSKRAKRAEYENMQAPVVGGVRLPHGNGETIRLARGASLSDFADKINANPASLVQALFNLGEMVTATQSVNDETLELLGGEMNYVVQVVSPEDEDRELLQSFDLSYGEDEGGEDDLEFRPPVVTVMGHVDHGKTRLLDTIRDATVREGEAGGITQHIGAYQVTVDLDGNERPITFIDTPGHEAFTAMRARGAKATDIAILVVAADDGVMPQTVEAVNHAQAADVPIVVAVNKIDKEGADPAKIRGQLTEYGLVPEEYGGDTMFVDISAKAGTNIEALLEAVVLTADASLDLRANPDMEAQGVAIEAHLDRGRGPVATVLIQRGTLRVGDSVVAGDAYGRVRRMVDEHGEDVEEALPSRPVQVIGFTSVPGAGDNFLVVDEDRIARQIADRRSARKRNALAARTRKRISLEDLDSALKETSQLNLILKGDNSGTVEALEEALLGIQVDDEVQLRVIDRGVGGVTETNVNLASASDAIIIGFNVRAEGKATELANREGVEIRYYSIIYQAIDEIESALKGMLKPIYEEKELGRAEIRAIFRSSKVGNIAGCLVQSGIMRRNAKARLLRDNVVVAQNLTVSSLKREKDDATEVREGYECGLTLTYNDIKEGDVIETYELVEKART.

Positions 31–317 are disordered; the sequence is FVKSASSTVE…RKSKRAKRAE (287 aa). Low complexity predominate over residues 61-78; sequence PAAGASNGAPAKPSAPGA. Pro residues-rich tracts occupy residues 79–99 and 108–120; these read RPGP…PAPA and PAAP…PPAP. The segment covering 121–135 has biased composition (low complexity); it reads AASAAPPSAPEAPSA. Composition is skewed to pro residues over residues 136–158 and 178–192; these read RPTP…PAPR and PRPQ…PRPG. Residues 193 to 205 show a composition bias toward gly residues; the sequence is PGAGGPRPGGGPR. The segment covering 212-242 has biased composition (pro residues); the sequence is NMPPRPVGGPRPGGGPRPGGGPRPGAGPRPT. Residues 244-301 show a composition bias toward gly residues; that stretch reads GGAGRPGGGGGGNYRGGGAGGGGGAGGAAAGGFRGRPGGGGGRPGQRGGAAGAFGRPG. The segment covering 305–314 has biased composition (basic residues); the sequence is KRGRKSKRAK. Residues 426 to 598 form the tr-type G domain; that stretch reads FRPPVVTVMG…VVLTADASLD (173 aa). The tract at residues 435 to 442 is G1; that stretch reads GHVDHGKT. 435 to 442 is a GTP binding site; the sequence is GHVDHGKT. The tract at residues 460–464 is G2; sequence GITQH. A G3 region spans residues 485–488; it reads DTPG. GTP is bound by residues 485-489 and 539-542; these read DTPGH and NKID. Positions 539–542 are G4; it reads NKID. Residues 575 to 577 form a G5 region; it reads SAK.

The protein belongs to the TRAFAC class translation factor GTPase superfamily. Classic translation factor GTPase family. IF-2 subfamily.

It is found in the cytoplasm. One of the essential components for the initiation of protein synthesis. Protects formylmethionyl-tRNA from spontaneous hydrolysis and promotes its binding to the 30S ribosomal subunits. Also involved in the hydrolysis of GTP during the formation of the 70S ribosomal complex. The chain is Translation initiation factor IF-2 from Mycolicibacterium gilvum (strain PYR-GCK) (Mycobacterium gilvum (strain PYR-GCK)).